The following is a 321-amino-acid chain: Gap junction delta-2 protein (321 aa).

Topologically, residues 1-19 (MGEWTILERLLEAAVQQHS) are cytoplasmic. The helical transmembrane segment at 20 to 42 (TMIGRILLTVVVIFRILIVAIVG) threads the bilayer. The Extracellular portion of the chain corresponds to 43–75 (ETVYDDEQTMFVCNTLQPGCNQACYDRAFPISH). Residues 76–98 (IRYWVFQIIMVCTPSLCFITYSV) traverse the membrane as a helical segment. The Cytoplasmic segment spans residues 99–197 (HQSAKQRERR…KLRRQEGISR (99 aa)). Residues 120–141 (PAESIGGPGGTGGGGSGGSKRE) are disordered. A compositionally biased stretch (gly residues) spans 125–137 (GGPGGTGGGGSGG). Residues 198-220 (FYIIQVVFRNALEIGFLVGQYFL) form a helical membrane-spanning segment. Topologically, residues 221 to 252 (YGFSVPGLYECNRYPCIKEVECYVSRPTEKTV) are extracellular. Residues 253-275 (FLVFMFAVSGICVVLNLAELNHL) traverse the membrane as a helical segment. Residues 276 to 321 (GWRKIKLAVRGAQAKRKSVYEIRNKDLPRVSVPNFGRTQSSDSAYV) are Cytoplasmic-facing.

This sequence belongs to the connexin family. Delta-type subfamily. A connexon is composed of a hexamer of connexins. In terms of tissue distribution, highly expressed in neurons.

The protein resides in the cell membrane. It localises to the cell junction. It is found in the gap junction. One gap junction consists of a cluster of closely packed pairs of transmembrane channels, the connexons, through which materials of low MW diffuse from one cell to a neighboring cell. In Mus musculus (Mouse), this protein is Gap junction delta-2 protein (Gjd2).